The primary structure comprises 65 residues: Conotoxin Cal16.1 (65 aa).

Residues 1 to 19 form the signal peptide; it reads MRCLSIFVLLVLLVSFAVA. Residues 20-48 constitute a propeptide that is removed on maturation; it reads ELDVEGEIVKQLLTRGTLKDADFWKRLEM. Glutamine 49 is subject to Pyrrolidone carboxylic acid. 2 disulfide bridges follow: cysteine 51–cysteine 60 and cysteine 53–cysteine 61. Glutamate 63 carries the glutamic acid 1-amide modification.

As to expression, expressed by the venom duct.

It is found in the secreted. Functionally, probable neurotoxin with unknown target. Possibly targets ion channels. This chain is Conotoxin Cal16.1, found in Californiconus californicus (California cone).